The following is a 316-amino-acid chain: Transaldolase (316 aa).

Residue Lys131 is the Schiff-base intermediate with substrate of the active site.

The protein belongs to the transaldolase family. Type 1 subfamily. Homodimer.

It localises to the cytoplasm. The enzyme catalyses D-sedoheptulose 7-phosphate + D-glyceraldehyde 3-phosphate = D-erythrose 4-phosphate + beta-D-fructose 6-phosphate. It participates in carbohydrate degradation; pentose phosphate pathway; D-glyceraldehyde 3-phosphate and beta-D-fructose 6-phosphate from D-ribose 5-phosphate and D-xylulose 5-phosphate (non-oxidative stage): step 2/3. Functionally, transaldolase is important for the balance of metabolites in the pentose-phosphate pathway. The polypeptide is Transaldolase (Chromohalobacter salexigens (strain ATCC BAA-138 / DSM 3043 / CIP 106854 / NCIMB 13768 / 1H11)).